Here is a 273-residue protein sequence, read N- to C-terminus: 2,3,4,5-tetrahydropyridine-2,6-dicarboxylate N-succinyltransferase (273 aa).

Belongs to the transferase hexapeptide repeat family.

Its subcellular location is the cytoplasm. The catalysed reaction is (S)-2,3,4,5-tetrahydrodipicolinate + succinyl-CoA + H2O = (S)-2-succinylamino-6-oxoheptanedioate + CoA. It functions in the pathway amino-acid biosynthesis; L-lysine biosynthesis via DAP pathway; LL-2,6-diaminopimelate from (S)-tetrahydrodipicolinate (succinylase route): step 1/3. This chain is 2,3,4,5-tetrahydropyridine-2,6-dicarboxylate N-succinyltransferase, found in Bordetella petrii (strain ATCC BAA-461 / DSM 12804 / CCUG 43448).